Consider the following 142-residue polypeptide: Putative pre-16S rRNA nuclease (142 aa).

The protein belongs to the YqgF nuclease family.

The protein localises to the cytoplasm. Functionally, could be a nuclease involved in processing of the 5'-end of pre-16S rRNA. This chain is Putative pre-16S rRNA nuclease, found in Lactobacillus delbrueckii subsp. bulgaricus (strain ATCC 11842 / DSM 20081 / BCRC 10696 / JCM 1002 / NBRC 13953 / NCIMB 11778 / NCTC 12712 / WDCM 00102 / Lb 14).